We begin with the raw amino-acid sequence, 511 residues long: V-type proton ATPase subunit B, brain isoform (511 aa).

Arginine 400 contributes to the ATP binding site.

The protein belongs to the ATPase alpha/beta chains family. As to quaternary structure, V-ATPase is a heteromultimeric enzyme made up of two complexes: the ATP-hydrolytic V1 complex and the proton translocation V0 complex. The V1 complex consists of three catalytic AB heterodimers that form a heterohexamer, three peripheral stalks each consisting of EG heterodimers, one central rotor including subunits D and F, and the regulatory subunits C and H. The proton translocation complex V0 consists of the proton transport subunit a, a ring of proteolipid subunits c9c'', rotary subunit d, subunits e and f, and the accessory subunits ATP6AP1/Ac45 and ATP6AP2/PRR. Kidney; found in early distal nephron, encompassing thick ascending limbs and distal convoluted tubules and in the alpha-intercalated cells of the cortical collecting ducts (at protein level). Expressed in epididymal clear cells (at protein level). Mainly expressed in the organ of Corti and spiral ganglion neurons, in both the early postnatal cochlea (P2) and the adult cochlea (P30).

The protein localises to the apical cell membrane. Its subcellular location is the melanosome. It localises to the cytoplasm. The protein resides in the cytoplasmic vesicle. It is found in the secretory vesicle. The protein localises to the synaptic vesicle membrane. Its subcellular location is the clathrin-coated vesicle membrane. In terms of biological role, non-catalytic subunit of the V1 complex of vacuolar(H+)-ATPase (V-ATPase), a multisubunit enzyme composed of a peripheral complex (V1) that hydrolyzes ATP and a membrane integral complex (V0) that translocates protons. V-ATPase is responsible for acidifying and maintaining the pH of intracellular compartments and in some cell types, is targeted to the plasma membrane, where it is responsible for acidifying the extracellular environment. In renal intercalated cells, can partially compensate the lack of ATP6V1B1 and mediate secretion of protons (H+) into the urine under base-line conditions but not in conditions of acid load. The chain is V-type proton ATPase subunit B, brain isoform (Atp6v1b2) from Mus musculus (Mouse).